Here is a 123-residue protein sequence, read N- to C-terminus: NADH-quinone oxidoreductase subunit A (123 aa).

3 helical membrane passes run 11–31, 68–88, and 93–113; these read YLPIAIFFGIAVLVSGLIMML, LVAILFIIFDLEITFLVPWAI, and IGKIGFFSMMFFLFVLIIGFI.

Belongs to the complex I subunit 3 family. As to quaternary structure, NDH-1 is composed of 14 different subunits. Subunits NuoA, H, J, K, L, M, N constitute the membrane sector of the complex.

It localises to the cell inner membrane. It carries out the reaction a quinone + NADH + 5 H(+)(in) = a quinol + NAD(+) + 4 H(+)(out). Its function is as follows. NDH-1 shuttles electrons from NADH, via FMN and iron-sulfur (Fe-S) centers, to quinones in the respiratory chain. The immediate electron acceptor for the enzyme in this species is believed to be ubiquinone. Couples the redox reaction to proton translocation (for every two electrons transferred, four hydrogen ions are translocated across the cytoplasmic membrane), and thus conserves the redox energy in a proton gradient. The sequence is that of NADH-quinone oxidoreductase subunit A from Rickettsia typhi (strain ATCC VR-144 / Wilmington).